Consider the following 433-residue polypeptide: MRMVDLIEKKRDGHALTKEEIQFIIEGYTKGDIPDYQMSALAMAIFFRGMNEEETAELTMAMVHSGDTIDLSRIEGIKVDKHSTGGVGDTTTLVLGPLVASVGVPVAKMSGRGLGHTGGTIDKLESVPGFHVEITNDEFIDLVNKNKIAVVGQSGNLTPADKKLYALRDVTATVNSIPLIASSIMSKKIAAGADAIVLDVKTGVGAFMKDLNDAKALAKAMVDIGNRVGRKTMAIISDMSQPLGYAIGNALEVKEAIDTLKGEGPEDFQELCLVLGSHMVYLAEKASSLEEARHMLEKAMKDGSALQTFKTFLAAQGGDASVVDDPSKLPQAKYIIELEAKEDGYVSEIVADAVGTAAMWLGAGRATKESTIDLAVGLVLRKKVGDAVKKGESLVTIYSNREQVDDVKQKLYENIRISATPVQAPTLIYDKIS.

81 to 83 (KHS) is a binding site for phosphate. Residues G88 and T90 each coordinate K(+). Residues T92, 108–110 (KMS), and T120 each bind phosphate. Substrate-binding residues include R168 and K187. Residues L243, A246, and E255 each contribute to the K(+) site.

Belongs to the thymidine/pyrimidine-nucleoside phosphorylase family. In terms of assembly, homodimer. K(+) serves as cofactor.

The enzyme catalyses uridine + phosphate = alpha-D-ribose 1-phosphate + uracil. It carries out the reaction thymidine + phosphate = 2-deoxy-alpha-D-ribose 1-phosphate + thymine. It catalyses the reaction 2'-deoxyuridine + phosphate = 2-deoxy-alpha-D-ribose 1-phosphate + uracil. In terms of biological role, catalyzes phosphorolysis of the pyrimidine nucleosides uridine, thymidine and 2'-deoxyuridine with the formation of the corresponding pyrimidine base and ribose-1-phosphate. This chain is Pyrimidine-nucleoside phosphorylase (pdp), found in Geobacillus stearothermophilus (Bacillus stearothermophilus).